We begin with the raw amino-acid sequence, 211 residues long: 3-demethoxyubiquinol 3-hydroxylase (211 aa).

Positions 60, 90, 93, 142, 174, and 177 each coordinate Fe cation.

Belongs to the COQ7 family. It depends on Fe cation as a cofactor.

It localises to the cell membrane. It catalyses the reaction a 5-methoxy-2-methyl-3-(all-trans-polyprenyl)benzene-1,4-diol + AH2 + O2 = a 3-demethylubiquinol + A + H2O. Its pathway is cofactor biosynthesis; ubiquinone biosynthesis. Functionally, catalyzes the hydroxylation of 2-nonaprenyl-3-methyl-6-methoxy-1,4-benzoquinol during ubiquinone biosynthesis. This is 3-demethoxyubiquinol 3-hydroxylase from Francisella tularensis subsp. novicida (strain U112).